A 337-amino-acid chain; its full sequence is RNA 3'-terminal phosphate cyclase (337 aa).

ATP is bound by residues glutamine 101 and 282–285 (HMSD). The Tele-AMP-histidine intermediate role is filled by histidine 306.

This sequence belongs to the RNA 3'-terminal cyclase family. Type 1 subfamily.

It is found in the cytoplasm. The enzyme catalyses a 3'-end 3'-phospho-ribonucleotide-RNA + ATP = a 3'-end 2',3'-cyclophospho-ribonucleotide-RNA + AMP + diphosphate. In terms of biological role, catalyzes the conversion of 3'-phosphate to a 2',3'-cyclic phosphodiester at the end of RNA. The mechanism of action of the enzyme occurs in 3 steps: (A) adenylation of the enzyme by ATP; (B) transfer of adenylate to an RNA-N3'P to produce RNA-N3'PP5'A; (C) and attack of the adjacent 2'-hydroxyl on the 3'-phosphorus in the diester linkage to produce the cyclic end product. The biological role of this enzyme is unknown but it is likely to function in some aspects of cellular RNA processing. This Saccharolobus islandicus (strain L.S.2.15 / Lassen #1) (Sulfolobus islandicus) protein is RNA 3'-terminal phosphate cyclase.